Here is a 202-residue protein sequence, read N- to C-terminus: ATP-dependent Clp protease proteolytic subunit (202 aa).

Ser-101 (nucleophile) is an active-site residue. The active site involves His-126.

Belongs to the peptidase S14 family. As to quaternary structure, component of the chloroplastic Clp protease core complex.

It localises to the plastid. Its subcellular location is the chloroplast stroma. The catalysed reaction is Hydrolysis of proteins to small peptides in the presence of ATP and magnesium. alpha-casein is the usual test substrate. In the absence of ATP, only oligopeptides shorter than five residues are hydrolyzed (such as succinyl-Leu-Tyr-|-NHMec, and Leu-Tyr-Leu-|-Tyr-Trp, in which cleavage of the -Tyr-|-Leu- and -Tyr-|-Trp bonds also occurs).. In terms of biological role, cleaves peptides in various proteins in a process that requires ATP hydrolysis. Has a chymotrypsin-like activity. Plays a major role in the degradation of misfolded proteins. In Acorus calamus (Sweet flag), this protein is ATP-dependent Clp protease proteolytic subunit.